Reading from the N-terminus, the 571-residue chain is Proline--tRNA ligase (571 aa).

It belongs to the class-II aminoacyl-tRNA synthetase family. ProS type 1 subfamily. As to quaternary structure, homodimer.

It is found in the cytoplasm. The enzyme catalyses tRNA(Pro) + L-proline + ATP = L-prolyl-tRNA(Pro) + AMP + diphosphate. Functionally, catalyzes the attachment of proline to tRNA(Pro) in a two-step reaction: proline is first activated by ATP to form Pro-AMP and then transferred to the acceptor end of tRNA(Pro). As ProRS can inadvertently accommodate and process non-cognate amino acids such as alanine and cysteine, to avoid such errors it has two additional distinct editing activities against alanine. One activity is designated as 'pretransfer' editing and involves the tRNA(Pro)-independent hydrolysis of activated Ala-AMP. The other activity is designated 'posttransfer' editing and involves deacylation of mischarged Ala-tRNA(Pro). The misacylated Cys-tRNA(Pro) is not edited by ProRS. This Actinobacillus succinogenes (strain ATCC 55618 / DSM 22257 / CCUG 43843 / 130Z) protein is Proline--tRNA ligase.